The sequence spans 309 residues: Tagatose-6-phosphate kinase (309 aa).

The protein belongs to the carbohydrate kinase PfkB family. LacC subfamily.

The catalysed reaction is D-tagatofuranose 6-phosphate + ATP = D-tagatofuranose 1,6-bisphosphate + ADP + H(+). Its pathway is carbohydrate metabolism; D-tagatose 6-phosphate degradation; D-glyceraldehyde 3-phosphate and glycerone phosphate from D-tagatose 6-phosphate: step 1/2. This is Tagatose-6-phosphate kinase from Streptococcus pyogenes serotype M5 (strain Manfredo).